Here is a 317-residue protein sequence, read N- to C-terminus: WSCD family member CG9164 (317 aa).

Residues 8-28 (FFGVSATIIIYIGGVLFLSMN) traverse the membrane as a helical segment. N-linked (GlcNAc...) asparagine glycosylation is found at Asn151, Asn227, and Asn233.

This sequence belongs to the WSCD family.

The protein localises to the membrane. The protein is WSCD family member CG9164 of Drosophila melanogaster (Fruit fly).